The primary structure comprises 593 residues: Probable ubiquitin carboxyl-terminal hydrolase 4 (593 aa).

A USP domain is found at 227 to 573; that stretch reads IGLTNLGNTC…SSYILFYKRS (347 aa). Residue cysteine 236 is the Nucleophile of the active site. Residues serine 338 and serine 343 each carry the phosphoserine modification. Histidine 530 acts as the Proton acceptor in catalysis.

It belongs to the peptidase C19 family. Interacts with sfp47.

Its subcellular location is the cytoplasm. The protein localises to the endosome. It carries out the reaction Thiol-dependent hydrolysis of ester, thioester, amide, peptide and isopeptide bonds formed by the C-terminal Gly of ubiquitin (a 76-residue protein attached to proteins as an intracellular targeting signal).. Functionally, has an ATP-independent isopeptidase activity, cleaving at the C-terminus of the ubiquitin moiety. Acts late in the proteolytic pathway in conjunction with the 26S proteasome. Plays a role in avoiding DNA overreplication. In Schizosaccharomyces pombe (strain 972 / ATCC 24843) (Fission yeast), this protein is Probable ubiquitin carboxyl-terminal hydrolase 4 (ubp4).